A 430-amino-acid chain; its full sequence is UDP-N-acetylglucosamine 1-carboxyvinyltransferase 1 (430 aa).

22-23 (KN) is a binding site for phosphoenolpyruvate. R102 is a binding site for UDP-N-acetyl-alpha-D-glucosamine. The active-site Proton donor is the C126. A 2-(S-cysteinyl)pyruvic acid O-phosphothioketal modification is found at C126. UDP-N-acetyl-alpha-D-glucosamine is bound by residues 131-135 (RPVDL), 172-175 (KVSV), D317, and I339.

This sequence belongs to the EPSP synthase family. MurA subfamily.

It localises to the cytoplasm. The catalysed reaction is phosphoenolpyruvate + UDP-N-acetyl-alpha-D-glucosamine = UDP-N-acetyl-3-O-(1-carboxyvinyl)-alpha-D-glucosamine + phosphate. Its pathway is cell wall biogenesis; peptidoglycan biosynthesis. In terms of biological role, cell wall formation. Adds enolpyruvyl to UDP-N-acetylglucosamine. In Mesorhizobium japonicum (strain LMG 29417 / CECT 9101 / MAFF 303099) (Mesorhizobium loti (strain MAFF 303099)), this protein is UDP-N-acetylglucosamine 1-carboxyvinyltransferase 1.